The chain runs to 1098 residues: PAN2-PAN3 deadenylation complex catalytic subunit PAN2 (1098 aa).

WD repeat units follow at residues 19-58 (ASKD…PFQL), 150-190 (TGFD…SVKS), 253-293 (PFPN…KLNV), and 300-338 (PASP…NFVN). Positions 340–466 (PAPLEEQDIP…SIFHLKSPTS (127 aa)) are linker. The tract at residues 417-442 (RNISQPYQSLREPPGSNSNAPRFISE) is disordered. The USP domain occupies 466–839 (SVPHCYSRLQ…KPVIIVYSEP (374 aa)). The Exonuclease domain occupies 894–1067 (IAIDAEFVVS…EDAYTALMLF (174 aa)). The a divalent metal cation site is built by aspartate 897, glutamate 899, aspartate 1006, and aspartate 1059.

Belongs to the peptidase C19 family. PAN2 subfamily. As to quaternary structure, forms a heterotrimer with an asymmetric homodimer of the regulatory subunit PAN3 to form the poly(A)-nuclease (PAN) deadenylation complex. It depends on a divalent metal cation as a cofactor.

It is found in the cytoplasm. The catalysed reaction is Exonucleolytic cleavage of poly(A) to 5'-AMP.. Positively regulated by the regulatory subunit PAN3. Its function is as follows. Catalytic subunit of the poly(A)-nuclease (PAN) deadenylation complex, one of two cytoplasmic mRNA deadenylases involved in mRNA turnover. PAN specifically shortens poly(A) tails of RNA and the activity is stimulated by poly(A)-binding protein PAB1. PAN deadenylation is followed by rapid degradation of the shortened mRNA tails by the CCR4-NOT complex. Deadenylated mRNAs are then degraded by two alternative mechanisms, namely exosome-mediated 3'-5' exonucleolytic degradation, or deadenylation-dependent mRNA decaping and subsequent 5'-3' exonucleolytic degradation by XRN1. May also be involved in post-transcriptional maturation of mRNA poly(A) tails. The sequence is that of PAN2-PAN3 deadenylation complex catalytic subunit PAN2 from Meyerozyma guilliermondii (strain ATCC 6260 / CBS 566 / DSM 6381 / JCM 1539 / NBRC 10279 / NRRL Y-324) (Yeast).